A 159-amino-acid polypeptide reads, in one-letter code: Protein-export protein SecB (159 aa).

It belongs to the SecB family. As to quaternary structure, homotetramer, a dimer of dimers. One homotetramer interacts with 1 SecA dimer.

The protein localises to the cytoplasm. In terms of biological role, one of the proteins required for the normal export of preproteins out of the cell cytoplasm. It is a molecular chaperone that binds to a subset of precursor proteins, maintaining them in a translocation-competent state. It also specifically binds to its receptor SecA. The sequence is that of Protein-export protein SecB from Marinomonas sp. (strain MWYL1).